Here is a 659-residue protein sequence, read N- to C-terminus: tRNA 5-methylaminomethyl-2-thiouridine biosynthesis bifunctional protein MnmC (659 aa).

The tract at residues 1 to 236 is tRNA (mnm(5)s(2)U34)-methyltransferase; that stretch reads MKPVMPHAQL…KWEILRGEFL (236 aa). The tract at residues 267–659 is FAD-dependent cmnm(5)s(2)U34 oxidoreductase; sequence IGAGLAGCAT…FALRRLIRGK (393 aa).

The protein in the N-terminal section; belongs to the methyltransferase superfamily. tRNA (mnm(5)s(2)U34)-methyltransferase family. It in the C-terminal section; belongs to the DAO family. It depends on FAD as a cofactor.

It localises to the cytoplasm. It catalyses the reaction 5-aminomethyl-2-thiouridine(34) in tRNA + S-adenosyl-L-methionine = 5-methylaminomethyl-2-thiouridine(34) in tRNA + S-adenosyl-L-homocysteine + H(+). Catalyzes the last two steps in the biosynthesis of 5-methylaminomethyl-2-thiouridine (mnm(5)s(2)U) at the wobble position (U34) in tRNA. Catalyzes the FAD-dependent demodification of cmnm(5)s(2)U34 to nm(5)s(2)U34, followed by the transfer of a methyl group from S-adenosyl-L-methionine to nm(5)s(2)U34, to form mnm(5)s(2)U34. The polypeptide is tRNA 5-methylaminomethyl-2-thiouridine biosynthesis bifunctional protein MnmC (Pseudomonas fluorescens (strain Pf0-1)).